The following is a 261-amino-acid chain: Enolase-phosphatase E1 (261 aa).

Mg(2+) is bound by residues aspartate 16 and glutamate 18. Substrate-binding positions include 153–154 (SS) and lysine 187. Aspartate 212 serves as a coordination point for Mg(2+).

This sequence belongs to the HAD-like hydrolase superfamily. MasA/MtnC family. In terms of assembly, monomer. Mg(2+) serves as cofactor.

The protein localises to the cytoplasm. It is found in the nucleus. The catalysed reaction is 5-methylsulfanyl-2,3-dioxopentyl phosphate + H2O = 1,2-dihydroxy-5-(methylsulfanyl)pent-1-en-3-one + phosphate. It participates in amino-acid biosynthesis; L-methionine biosynthesis via salvage pathway; L-methionine from S-methyl-5-thio-alpha-D-ribose 1-phosphate: step 3/6. It functions in the pathway amino-acid biosynthesis; L-methionine biosynthesis via salvage pathway; L-methionine from S-methyl-5-thio-alpha-D-ribose 1-phosphate: step 4/6. Its function is as follows. Bifunctional enzyme that catalyzes the enolization of 2,3-diketo-5-methylthiopentyl-1-phosphate (DK-MTP-1-P) into the intermediate 2-hydroxy-3-keto-5-methylthiopentenyl-1-phosphate (HK-MTPenyl-1-P), which is then dephosphorylated to form the acireductone 1,2-dihydroxy-3-keto-5-methylthiopentene (DHK-MTPene). This is Enolase-phosphatase E1 (enoph1) from Danio rerio (Zebrafish).